The primary structure comprises 304 residues: MYYGFDMGGTKIELGVFDENLQRIWHKRVPTPCEDYPQLLQILRDLTEEADTYCGVQGSVGIGIPGLPNADDGTVFTANVPSAMGQPLQADLSRLIQREVRIDNDANCFALSEAWDPEFRTYPTVLGLILGTGVGGGLIVNGSIVSGRNHITGEFGHFRLPVDALDILGADIPRVPCGCGHRGCIENYISGRGFEWMYSHFYQHTLPATDIIAHYAAGEPKAVAHVERFMDVLAVCLGNLLTMLDPHLVVVGGGLSNFEKIYQELPKRLPAHLLRVARLPRIEKARYGDSGGVRGAAFLHLAEK.

ATP contacts are provided by residues 4–11 (GFDMGGTK) and 133–140 (GVGGGLIV). Residues His-157, Cys-177, Cys-179, and Cys-184 each contribute to the Zn(2+) site.

This sequence belongs to the ROK (NagC/XylR) family. NagK subfamily.

The enzyme catalyses N-acetyl-D-glucosamine + ATP = N-acetyl-D-glucosamine 6-phosphate + ADP + H(+). The protein operates within cell wall biogenesis; peptidoglycan recycling. Catalyzes the phosphorylation of N-acetyl-D-glucosamine (GlcNAc) derived from cell-wall degradation, yielding GlcNAc-6-P. This Yersinia pseudotuberculosis serotype O:3 (strain YPIII) protein is N-acetyl-D-glucosamine kinase.